The following is a 425-amino-acid chain: Transmembrane protein 184A (425 aa).

Transmembrane regions (helical) follow at residues 51 to 71 (LFLTSALARGVSGVFVWTALL), 96 to 116 (LLFIVPIYAFDSWLSLLLLGG), 133 to 153 (FVIYSFLTLCFQYLGGESAIM), 189 to 209 (TLQFCIVKPVMALITIILQAF), 226 to 246 (VTLVYNASVSLALYALFLFYF), 261 to 281 (FLTIKAIIFLSFWQGMLLAIL), and 303 to 323 (LAAGYQNFLICIEMLFASLAL). The tract at residues 375–425 (QYTQQSTHEAPGPGQGGHPSPSTHPGPASGSGGGKKSRNIEKRMLIPSEDL) is disordered. A compositionally biased stretch (low complexity) spans 392–402 (HPSPSTHPGPA).

It belongs to the TMEM184 family. In terms of tissue distribution, expressed in vascular cells (at protein level).

The protein resides in the cell membrane. It localises to the cytoplasm. It is found in the perinuclear region. The protein localises to the early endosome membrane. Its subcellular location is the endosome. The protein resides in the cytoplasmic vesicle. It localises to the secretory vesicle membrane. It is found in the cytoplasmic vesicle membrane. In terms of biological role, acts as a heparin receptor in vascular cells. May be involved in vesicle transport in exocrine cells and Sertoli cells. The sequence is that of Transmembrane protein 184A (Tmem184a) from Rattus norvegicus (Rat).